Here is a 592-residue protein sequence, read N- to C-terminus: K(+) efflux antiporter 4 (592 aa).

The N-terminal stretch at Met-1–Tyr-35 is a signal peptide. 12 helical membrane passes run Leu-169 to Cys-189, Pro-193 to Val-213, Thr-221 to Ala-241, Ala-248 to Thr-268, Gly-279 to Met-299, Val-313 to Leu-333, Val-343 to Leu-363, Leu-388 to Leu-408, Asn-437 to Trp-457, Ile-462 to Val-482, Thr-491 to Ser-511, and Leu-535 to Leu-555.

The protein belongs to the monovalent cation:proton antiporter 2 (CPA2) transporter (TC 2.A.37) family. KEA (TC 2.A.37.1) subfamily. Expressed in roots, stems, leaves, flowers and silique.

It localises to the golgi apparatus membrane. It is found in the golgi apparatus. The protein localises to the trans-Golgi network membrane. The protein resides in the prevacuolar compartment membrane. Its subcellular location is the endomembrane system. It catalyses the reaction K(+)(in) + H(+)(out) = K(+)(out) + H(+)(in). Functionally, electroneutral K(+)/H(+) efflux antiporter involved in K(+) homeostasis and osmotic adjustment. Together with KEA5 and KEA6, promotes growth and development, and facilitates endosomal pH and ions homeostasis, as well as salt tolerance (e.g. K(+), NaCl and LiCl), probably by supporting cell wall biosynthesis during rapid etiolated seedling growth. This chain is K(+) efflux antiporter 4, found in Arabidopsis thaliana (Mouse-ear cress).